A 552-amino-acid chain; its full sequence is Urocanate hydratase (552 aa).

Residues 49–50, Q127, 173–175, D193, 239–240, 260–264, 270–271, and Y319 each bind NAD(+); these read GG, GMG, NA, QTSAH, and YI. C407 is an active-site residue. Residue G489 coordinates NAD(+).

This sequence belongs to the urocanase family. Requires NAD(+) as cofactor.

Its subcellular location is the cytoplasm. It catalyses the reaction 4-imidazolone-5-propanoate = trans-urocanate + H2O. The protein operates within amino-acid degradation; L-histidine degradation into L-glutamate; N-formimidoyl-L-glutamate from L-histidine: step 2/3. Functionally, catalyzes the conversion of urocanate to 4-imidazolone-5-propionate. The sequence is that of Urocanate hydratase from Bacillus mycoides (strain KBAB4) (Bacillus weihenstephanensis).